We begin with the raw amino-acid sequence, 159 residues long: NADH dehydrogenase [ubiquinone] 1 beta subcomplex subunit 10 (159 aa).

This sequence belongs to the complex I NDUFB10 subunit family. As to quaternary structure, complex I is composed of 45 different subunits.

The protein localises to the mitochondrion inner membrane. In terms of biological role, accessory subunit of the mitochondrial membrane respiratory chain NADH dehydrogenase (Complex I), that is believed not to be involved in catalysis. Complex I functions in the transfer of electrons from NADH to the respiratory chain. The immediate electron acceptor for the enzyme is believed to be ubiquinone. The chain is NADH dehydrogenase [ubiquinone] 1 beta subcomplex subunit 10 from Bombyx mori (Silk moth).